The chain runs to 213 residues: Phosphatidylcholine transfer protein (213 aa).

Position 1 is an N-acetylmethionine (methionine 1). The region spanning 1-212 (MDPGAGAFSE…MVKACQNYKK (212 aa)) is the START domain. The a 1,2-diacyl-sn-glycero-3-phosphocholine site is built by tyrosine 72 and arginine 78. Serine 139 carries the post-translational modification Phosphoserine. Residue glutamine 157 coordinates a 1,2-diacyl-sn-glycero-3-phosphocholine. Residues 171 to 176 (VFMYYF) are part of the binding site for phosphatidylcholine.

As to quaternary structure, interacts with ACOT13/THEM2.

It is found in the cytoplasm. Catalyzes the transfer of phosphatidylcholine between membranes. Binds phosphatidylcholine in a tight 1:1 stoichiometric complex. The sequence is that of Phosphatidylcholine transfer protein (PCTP) from Bos taurus (Bovine).